We begin with the raw amino-acid sequence, 935 residues long: Dual 3',5'-cyclic-AMP and -GMP phosphodiesterase 11A (935 aa).

The interval Arg-41–Phe-125 is disordered. The segment covering Ala-54–Ser-69 has biased composition (low complexity). Phosphoserine occurs at positions 162, 163, and 239. 2 consecutive GAF domains span residues Asp-217 to Ile-370 and Asp-402 to Ile-558. Ser-424 lines the 3',5'-cyclic GMP pocket. A PDEase domain is found at Ser-588–Arg-912. The Proton donor role is filled by His-664. Positions 668, 704, 705, and 816 each coordinate a divalent metal cation. The interval Val-915 to Leu-935 is disordered.

The protein belongs to the cyclic nucleotide phosphodiesterase family. The cofactor is a divalent metal cation. Isoform 1 is expressed in brain, heart, kidney and liver, but not in prostate. Isoform 2 is specifically expressed in testis. Isoform 3 is expressed in various tissues including brain, lung, skeletal muscle, spleen, testis and prostate.

Its subcellular location is the cytoplasm. It is found in the cytosol. It catalyses the reaction 3',5'-cyclic GMP + H2O = GMP + H(+). The enzyme catalyses 3',5'-cyclic AMP + H2O = AMP + H(+). Its activity is regulated as follows. Inhibited by 3-isobutyl-1-methylxanthine (IBMX), zaprinast and dipyridamole. cGMP acts as an allosteric activator. Plays a role in signal transduction by regulating the intracellular concentration of cyclic nucleotides cAMP and cGMP. Catalyzes the hydrolysis of both cAMP and cGMP to 5'-AMP and 5'-GMP, respectively. The polypeptide is Dual 3',5'-cyclic-AMP and -GMP phosphodiesterase 11A (Rattus norvegicus (Rat)).